A 160-amino-acid chain; its full sequence is Leptin (160 aa).

The signal sequence occupies residues 1–17 (MDYTLALALSLLQLSMC). Residues Cys109 and Cys160 are joined by a disulfide bond.

It belongs to the leptin family.

Its subcellular location is the secreted. Functionally, may function as part of a signaling pathway that acts to regulate the size of the body fat depot. The polypeptide is Leptin (lep) (Tetraodon nigroviridis (Spotted green pufferfish)).